The sequence spans 222 residues: Methionine import system permease protein MetP (222 aa).

The region spanning T18–G212 is the ABC transmembrane type-1 domain. 5 consecutive transmembrane segments (helical) span residues T25 to L45, F73 to G93, A97 to L117, I152 to I172, and F195 to I215.

It belongs to the binding-protein-dependent transport system permease family. CysTW subfamily. The complex is composed of two ATP-binding proteins (MetN), two transmembrane proteins (MetP) and a solute-binding protein (MetQ).

The protein localises to the cell membrane. In terms of biological role, part of the ABC transporter complex MetNPQ involved in methionine import. Responsible for the translocation of the substrate across the membrane. It has also been shown to be involved in methionine sulfoxide transport. The chain is Methionine import system permease protein MetP (metP) from Bacillus subtilis (strain 168).